A 99-amino-acid polypeptide reads, in one-letter code: Large ribosomal subunit protein bL21 (99 aa).

The protein belongs to the bacterial ribosomal protein bL21 family. In terms of assembly, part of the 50S ribosomal subunit. Contacts protein L20.

In terms of biological role, this protein binds to 23S rRNA in the presence of protein L20. This chain is Large ribosomal subunit protein bL21, found in Acholeplasma laidlawii (strain PG-8A).